The chain runs to 349 residues: MAIPITVLDCDLLLYGRGHRTLDRFKLDDVTDEYLMSMYGFPRQFIYYLVELLGANLSRPTQRSRAISPETQVLAALGFYTSGSFQTRMGDAIGISQASMSRCVANVTEALVERASQFIRFPADEASIQALKDEFYGLAGMPGVMGVVDCIHVAIKAPNAEDLSYVNRKGLHSLNCLMVCDIRGTLMTVETNWPGSLQDCAVLQQSSLSSQFEAGMHKDSWLLGDSSFFLRTWLMTPLHIPETPAEYRYNMAHSATHSVIEKTFRTLCSRFRCLDGSKGALQYSPEKSSHIILACCVLHNISLEHGMDVWSSPMTGPMEQPPEEEYEHMESLDLEADRIRQELMLTHFS.

The region spanning 148–300 is the DDE Tnp4 domain; the sequence is VDCIHVAIKA…IILACCVLHN (153 aa). D149, D199, D225, and E261 together coordinate a divalent metal cation.

It belongs to the HARBI1 family. Interacts with NAIF1. It depends on a divalent metal cation as a cofactor. In terms of tissue distribution, detected in brain, eye, nerve tissue, kidney and lung.

The protein localises to the nucleus. It is found in the cytoplasm. Its function is as follows. Transposase-derived protein that may have nuclease activity (Potential). Does not have transposase activity. This chain is Putative nuclease HARBI1 (HARBI1), found in Homo sapiens (Human).